The chain runs to 361 residues: Putative geranylgeranyl pyrophosphate synthase 8, chloroplastic (361 aa).

A chloroplast-targeting transit peptide spans 1–39 (MATTVHLSSFSLFIQSRGRRDNSISSVKSLKKRTGLSPS). The segment at 24-58 (ISSVKSLKKRTGLSPSSALTSQGGRDMIPPQGKSN) is disordered. A compositionally biased stretch (polar residues) spans 36–46 (LSPSSALTSQG). Lys-107, Arg-110, and His-139 together coordinate isopentenyl diphosphate. Mg(2+) contacts are provided by Asp-146 and Asp-152. Arg-157 is a dimethylallyl diphosphate binding site. Arg-158 lines the isopentenyl diphosphate pocket. Positions 246, 247, 284, 301, and 311 each coordinate dimethylallyl diphosphate.

The protein belongs to the FPP/GGPP synthase family. Monomer. The cofactor is Mg(2+).

It is found in the plastid. Its subcellular location is the chloroplast. It catalyses the reaction isopentenyl diphosphate + dimethylallyl diphosphate = (2E)-geranyl diphosphate + diphosphate. The enzyme catalyses isopentenyl diphosphate + (2E)-geranyl diphosphate = (2E,6E)-farnesyl diphosphate + diphosphate. It carries out the reaction isopentenyl diphosphate + (2E,6E)-farnesyl diphosphate = (2E,6E,10E)-geranylgeranyl diphosphate + diphosphate. It functions in the pathway isoprenoid biosynthesis; farnesyl diphosphate biosynthesis; farnesyl diphosphate from geranyl diphosphate and isopentenyl diphosphate: step 1/1. The protein operates within isoprenoid biosynthesis; geranyl diphosphate biosynthesis; geranyl diphosphate from dimethylallyl diphosphate and isopentenyl diphosphate: step 1/1. Its pathway is isoprenoid biosynthesis; geranylgeranyl diphosphate biosynthesis; geranylgeranyl diphosphate from farnesyl diphosphate and isopentenyl diphosphate: step 1/1. Its function is as follows. Catalyzes the trans-addition of the three molecules of IPP onto DMAPP to form geranylgeranyl pyrophosphate. The chain is Putative geranylgeranyl pyrophosphate synthase 8, chloroplastic from Arabidopsis thaliana (Mouse-ear cress).